We begin with the raw amino-acid sequence, 505 residues long: MSRQDKKLTGVFGHPVSDRENSMTAGPRGPLLMQDIYFLEQMSQFDREVIPERRMHAKGSGAFGTFTVTKDITKYTNAKIFSEIGKQTEMFARFSTVAGERGAADAERDIRGFALKFYTEEGNWDLVGNNTPVFFFRDPKLFVSLNRAVKRDPRTNMRDAQNNWDFWTGLPEALHQVTILMSDRGIPKDLRHMHGFGSHTYSMYNDSGERVWVKFHFRTQQGIENLTDEVAAEIIATDRDSSQRDLFEAIEKGDYPKWTMYIQVMTEEQAKNHKDNPFDLTKVWYHDEYPLIEVGEFELNRNPDNYFMDVEQAAFAPTNIIPGLDFSPDKMLQGRLFSYGDAQRYRLGVNHWQIPVNQPKGVGIENICPFSRDGQMRVVDNNQGGGTHYYPNNHGKFDSQPEYKKPPFPTDGYGYEYNQRQDDDNYFEQPGKLFRLQSEDAKERIFTNTANAMEGVTDDVKRRHIRHCYKADPEYGKGVAKALGIDINSIDLETENDETYENFEK.

Residues 1–25 (MSRQDKKLTGVFGHPVSDRENSMTA) form a disordered region. Active-site residues include His56 and Asn129. Heme is bound at residue Tyr339.

It belongs to the catalase family. Homodimer. Heme serves as cofactor.

It carries out the reaction 2 H2O2 = O2 + 2 H2O. Its function is as follows. Decomposes hydrogen peroxide into water and oxygen; serves to protect cells from the toxic effects of hydrogen peroxide. The chain is Catalase (katA) from Staphylococcus aureus (strain MRSA252).